The sequence spans 251 residues: Hydroxyacylglutathione hydrolase (251 aa).

Zn(2+)-binding residues include histidine 53, histidine 55, aspartate 57, histidine 58, histidine 110, aspartate 127, and histidine 165.

Belongs to the metallo-beta-lactamase superfamily. Glyoxalase II family. In terms of assembly, monomer. Zn(2+) is required as a cofactor.

It catalyses the reaction an S-(2-hydroxyacyl)glutathione + H2O = a 2-hydroxy carboxylate + glutathione + H(+). It participates in secondary metabolite metabolism; methylglyoxal degradation; (R)-lactate from methylglyoxal: step 2/2. Thiolesterase that catalyzes the hydrolysis of S-D-lactoyl-glutathione to form glutathione and D-lactic acid. This is Hydroxyacylglutathione hydrolase from Edwardsiella ictaluri (strain 93-146).